The primary structure comprises 1228 residues: MEVPLVAYLHSCPNCGGPITSDRLASGLPCRECLPDGAKAGSIKQVITALRKRKALQGLAWVEAYLRGYEEFAEFFKRIVGFEMWGAQRLWARRFVRGKSFAIVAPTGSGKTTFILIATLYSAKQGKRALLIFPTSALAHQAYKKLLTFAERGGVSLKALAYHSLLTEREKKEALEALERGDFDVLVTTSAFLPKRFELLSRYKFDFVAADDVDSILRATSKNIDRILRLLGVSDAVLNTALEVINLTKQLRKAEVAGDLKEVERLDQEMAKLRAKLREEVQRLKLGVFVASGALAKARRTVRLLLFREILGFDVGGRAEGLRNVVDLYVEASDNVIEQTLALVKRLGPGGIIYVQDRELGEAIVERAREAGLAVEHFFRPRRGVLESFERGELAALVGLASSRSALVRGIDLPHVIRYVIFVGVPKFKFRVRLEEFSIPAYLTFLYNVRSVLAGDARYKADRLIGQLKRLAPYALSVQEALKKASEGAELSSFDRHAVDVVKSAVEFVNSLLQNEEIRKAIETSSEVKLAYIDGEMYVLVPDVTTYIQGSGRTSRLYAGGLSKGLSVVIVDDPKVFHALKRELSLRFDEAEFKHLGEADLDKILADVDRDRKTIRDIMEGRLVPAARGVDLMRTILMVVESPTKARTIANFFGRPSLIISEGIPIYEVSTGDAVLMVTASLGHIYELPTSLNKIDQRQREVLAKWFGDFKHGNYDGENYAVIVKEYGFVPVYNKIWRCRGAVYVDDIDIPPGCKPLDVLEAIRNIAVEVDTVLLGTDPDSEGEKIAFDLYLGLRPYVQDIRRVEFHEVTRRAILNALANPRGVNFSLVKAQIVRRVEDRWIGFGLSKILQANFKNPNLSAGRVQTPVLGWIVNTYEESLKNRVYNVELQLNDVDIRLQVPRDVLDVLRKKKRVAIKLVARERRQVNPPPPYTTDELLRDAVNKLGLSADYAMRLAQDLFESGLITYHRTDSTRVSTAGIAIAREYIVRKFGEGVFKPRSWGEAEEGAHEAIRPTRPIDVEELRGLVNAGVIQLAIQLTKSHYQLYDIIFRRFMASQMEPSVVEVAKYNVEIDGHVIQLERTVGVAYMGFQTLYQLTPVEPELPTGTLDVVIKRYRVVRRVLSQADVLALMRQRGIGRPSTYAHILQVLAKRYYVYVTGRTKLMIPTKRGREIFRFLKEAFGKLVSEDRTRLIEQYMDAIEVGKARYEEVIAELYDEFRKEVLPHLAS.

An RG N-terminal-type zinc finger spans residues 1–41 (MEVPLVAYLHSCPNCGGPITSDRLASGLPCRECLPDGAKAG). Zn(2+)-binding residues include C12, C15, C30, and C33. Residues Q88 and 105–112 (APTGSGKT) contribute to the ATP site. Residues 92-255 (ARRFVRGKSF…NLTKQLRKAE (164 aa)) enclose the Helicase ATP-binding domain. A DEAD box motif is present at residues 211 to 214 (DDVD). The topoisomerase I stretch occupies residues 631-1228 (DLMRTILMVV…RKEVLPHLAS (598 aa)). The Toprim domain maps to 635–809 (TILMVVESPT…DIRRVEFHEV (175 aa)). The Mg(2+) site is built by E641 and D778. The Topo IA-type catalytic domain occupies 825 to 1223 (NFSLVKAQIV…LYDEFRKEVL (399 aa)). Y967 functions as the O-(5'-phospho-DNA)-tyrosine intermediate in the catalytic mechanism.

It in the N-terminal section; belongs to the DEAD box helicase family. DDVD subfamily. The protein in the C-terminal section; belongs to the type IA topoisomerase family. Monomer. Zn(2+) serves as cofactor. It depends on Mg(2+) as a cofactor.

Its subcellular location is the cytoplasm. It catalyses the reaction ATP + H2O = ADP + phosphate + H(+). In terms of biological role, modifies the topological state of DNA by introducing positive supercoils in an ATP-dependent process, increasing the linking number in steps of +1. Binds to single-stranded DNA, transiently cleaves and then rejoins the ends, introducing a positive supercoil in the process. The scissile phosphodiester is attacked by the catalytic tyrosine of the enzyme, resulting in the formation of a DNA-(5'-phosphotyrosyl)-enzyme intermediate. Probably involved in rewinding DNA strands in regions of the chromosome that have opened up to allow replication, transcription, DNA repair and/or for DNA protection. The chain is Reverse gyrase from Pyrobaculum aerophilum (strain ATCC 51768 / DSM 7523 / JCM 9630 / CIP 104966 / NBRC 100827 / IM2).